A 122-amino-acid chain; its full sequence is UPF0102 protein R00337 (122 aa).

This sequence belongs to the UPF0102 family.

The chain is UPF0102 protein R00337 from Rhizobium meliloti (strain 1021) (Ensifer meliloti).